The primary structure comprises 804 residues: DNA mismatch repair protein MutS (804 aa).

614-621 (GPNMAGKS) lines the ATP pocket.

It belongs to the DNA mismatch repair MutS family.

In terms of biological role, this protein is involved in the repair of mismatches in DNA. It is possible that it carries out the mismatch recognition step. This protein has a weak ATPase activity. In Ehrlichia ruminantium (strain Gardel), this protein is DNA mismatch repair protein MutS.